The sequence spans 224 residues: MSDVWQQQRQRMVDEQLRPRGIHDQRILAAMANVPRHLFVPEALQAQAYSDQALPLTLGQTISQPYIVALMAQELLLNPHEQLLEIGAGSGYAAAVFAELVRKVVTIERHQALAQQTQVRLRNLGYVNIEVVWGDGSLGYPTAAPYHAISIPAATPQLAQTLLSQLHDGGRLVAPIGDAQDQQLIRLQRQGQNWQKTTISNVRFVPLIGAGGWEHAPETTAEGE.

Ser-63 is an active-site residue.

This sequence belongs to the methyltransferase superfamily. L-isoaspartyl/D-aspartyl protein methyltransferase family.

The protein resides in the cytoplasm. The enzyme catalyses [protein]-L-isoaspartate + S-adenosyl-L-methionine = [protein]-L-isoaspartate alpha-methyl ester + S-adenosyl-L-homocysteine. Functionally, catalyzes the methyl esterification of L-isoaspartyl residues in peptides and proteins that result from spontaneous decomposition of normal L-aspartyl and L-asparaginyl residues. It plays a role in the repair and/or degradation of damaged proteins. In Herpetosiphon aurantiacus (strain ATCC 23779 / DSM 785 / 114-95), this protein is Protein-L-isoaspartate O-methyltransferase.